The following is a 331-amino-acid chain: MSLLCYNRGCGQRFDPETNTEDSCTYHPGVPVFHDALKGWSCCKRRTTDFSDFLSIVGCTKGLHNSEKPPEPVKPDVKSTTERKELAELKPKFQEHIIQAPKPLETIKRPSPDEPMTNLQLKVSASLKQALDKLKLSSENEEKKEEDSDEIKIGTPCKNAGCSKTYQGPHSTEEVCQYHSGVPIFHEGMKYWSCCKRKTSDFNTFLAQEGCTTGTHVWTKKDAGKKVVPCRHDWHQTGGEVTVSIYAKNSVPDLSYVEANSTMLNIHIVFEGEKEFHRNVKLWGVIDVKRSYVNMTATKIEVSMRKAEPLLWASLELPVSNTQQTNENSDQ.

Cys-5, Cys-10, Cys-24, His-27, Cys-42, Cys-43, Cys-59, His-64, Cys-157, Cys-162, Cys-176, His-179, Cys-194, Cys-195, Cys-211, and His-216 together coordinate Zn(2+). CHORD domains are found at residues 5–64 and 157–216; these read CYNR…KGLH and CKNA…TGTH. The CS domain maps to 227–316; it reads VVPCRHDWHQ…AEPLLWASLE (90 aa).

Regulates centrosome duplication. This Gallus gallus (Chicken) protein is Cysteine and histidine-rich domain-containing protein 1 (CHORDC1).